We begin with the raw amino-acid sequence, 402 residues long: Oxysterol-binding protein 8 (402 aa).

Residues 328 to 361 (DRIALEEGNLDVAAKEKHNLEEKQREDKRQRVAE) are a coiled coil.

The protein belongs to the OSBP family.

The polypeptide is Oxysterol-binding protein 8 (osbH) (Dictyostelium discoideum (Social amoeba)).